Reading from the N-terminus, the 366-residue chain is Purple acid phosphatase 3 (366 aa).

Residues 1–32 form the signal peptide; that stretch reads MTYIYRDTKITTKSTIPFLIFFLFCFSNLSMA. Asp-81 lines the Fe cation pocket. Asn-89 is a glycosylation site (N-linked (GlcNAc...) asparagine). The Fe cation site is built by Asp-114 and Tyr-117. Asp-114 serves as a coordination point for Zn(2+). The Zn(2+) site is built by Asn-152 and His-246. The active-site Proton donor is the His-255. His-281 provides a ligand contact to Zn(2+). 281 to 283 lines the substrate pocket; the sequence is HDH. Residue His-283 participates in Fe cation binding.

It belongs to the metallophosphoesterase superfamily. Purple acid phosphatase family. In terms of assembly, homodimer. The cofactor is Fe cation. Zn(2+) is required as a cofactor. As to expression, expressed in stems, leaves, flowers and siliques.

Its subcellular location is the secreted. The enzyme catalyses a phosphate monoester + H2O = an alcohol + phosphate. The chain is Purple acid phosphatase 3 (PAP3) from Arabidopsis thaliana (Mouse-ear cress).